A 923-amino-acid chain; its full sequence is Protocadherin gamma-B4 (923 aa).

A signal peptide spans 1–30 (MGSGAGELGRAERLPVLFLFLLSLFCPALC). Cadherin domains are found at residues 31-133 (EQIR…TPKF), 134-242 (TQNS…APVF), 243-345 (SQDV…APEV), 346-450 (IFQS…APVF), 451-560 (SQSS…APRV), and 568-673 (DGSA…LPDI). The Extracellular segment spans residues 31-689 (EQIRYRIPEE…SDLQAELQFY (659 aa)). N-linked (GlcNAc...) asparagine glycosylation is found at Asn417 and Asn543. A helical membrane pass occupies residues 690–710 (LVVALALISVLFLVAMILAIA). The Cytoplasmic segment spans residues 711–923 (LRLRRSSSPA…KKKSGKKEKK (213 aa)). Disordered regions lie at residues 797-832 (SHQQ…WPNN) and 893-923 (ATLT…KEKK). A compositionally biased stretch (basic residues) spans 913 to 923 (NKKKSGKKEKK).

It is found in the cell membrane. Potential calcium-dependent cell-adhesion protein. May be involved in the establishment and maintenance of specific neuronal connections in the brain. The polypeptide is Protocadherin gamma-B4 (PCDHGB4) (Homo sapiens (Human)).